A 387-amino-acid polypeptide reads, in one-letter code: Succinate--CoA ligase [ADP-forming] subunit beta (387 aa).

ATP-binding positions include lysine 46, glycine 53–glycine 55, glutamate 99, alanine 102, and glutamate 107. Residues asparagine 199 and aspartate 213 each coordinate Mg(2+). Residues asparagine 264 and glycine 321–valine 323 each bind substrate.

It belongs to the succinate/malate CoA ligase beta subunit family. Heterotetramer of two alpha and two beta subunits. It depends on Mg(2+) as a cofactor.

The enzyme catalyses succinate + ATP + CoA = succinyl-CoA + ADP + phosphate. It carries out the reaction GTP + succinate + CoA = succinyl-CoA + GDP + phosphate. It participates in carbohydrate metabolism; tricarboxylic acid cycle; succinate from succinyl-CoA (ligase route): step 1/1. Functionally, succinyl-CoA synthetase functions in the citric acid cycle (TCA), coupling the hydrolysis of succinyl-CoA to the synthesis of either ATP or GTP and thus represents the only step of substrate-level phosphorylation in the TCA. The beta subunit provides nucleotide specificity of the enzyme and binds the substrate succinate, while the binding sites for coenzyme A and phosphate are found in the alpha subunit. This is Succinate--CoA ligase [ADP-forming] subunit beta from Campylobacter jejuni subsp. doylei (strain ATCC BAA-1458 / RM4099 / 269.97).